A 53-amino-acid chain; its full sequence is Conotoxin Cal6.31 (53 aa).

A signal peptide spans 1 to 24 (MKLTCVLIAAVLLLAVCQLDSADA). 3 disulfides stabilise this stretch: cysteine 29-cysteine 43, cysteine 36-cysteine 47, and cysteine 42-cysteine 51.

It belongs to the conotoxin O1 superfamily. As to expression, expressed by the venom duct.

The protein localises to the secreted. In terms of biological role, probable neurotoxin. This Californiconus californicus (California cone) protein is Conotoxin Cal6.31.